A 1239-amino-acid polypeptide reads, in one-letter code: WD repeat-containing protein 11 (1239 aa).

WD repeat units follow at residues 63–112, 115–158, 358–398, 476–515, 571–610, 713–750, 752–792, 798–836, and 898–944; these read RHKA…AHCE, EHSK…KLWK, TKTV…SKSS, RMCP…LHKE, NDEP…LLRE, GSMG…SRGV, THRG…MVSS, NVNY…ASYR, and SLSN…IQAF. The disordered stretch occupies residues 1213 to 1239; sequence EDLSQTEGTGTESSPADDTDNSLVNIE. Over residues 1215–1226 the composition is skewed to polar residues; sequence LSQTEGTGTESS.

As to quaternary structure, component of the complex WDR11.

It is found in the cytoplasm. The protein resides in the cytoskeleton. It localises to the cilium basal body. The protein localises to the nucleus. Its subcellular location is the cilium axoneme. It is found in the cytoplasmic vesicle. The protein resides in the golgi apparatus. It localises to the trans-Golgi network. Its function is as follows. Involved in the Hedgehog (Hh) signaling pathway, is essential for normal ciliogenesis. Regulates the proteolytic processing of gli3 and cooperates with the transcription factor emx1 in the induction of downstream Hh pathway gene expression and gonadotropin-releasing hormone production. WDR11 complex facilitates the tethering of Adaptor protein-1 complex (AP-1)-derived vesicles. The sequence is that of WD repeat-containing protein 11 (wdr11) from Danio rerio (Zebrafish).